The primary structure comprises 268 residues: MERYQQLFTRLSEKKEGAFVPFVTLGDPSPEQSLKIIDTLIAAGADALELGVPFSDPLADGPTIQDANLRAFAAGVTSGQCFEMLAAIRQKYPEIPIGLLMYANLVFSNGIDEFYQRCAEVGVDSVLVADVPVVESAAFRAAALRHGIAPIFICPPNADDELLREIASYGRGYTYLVSRAGVTGAEKRAQLPLNHLVAKLNEYHAAPPLQGFGISDPAQVRETVASGAAGAISGSAIVRIIEKNLNQPDVMLSELHAFVSEMKAATRS.

Residues Glu49 and Asp60 each act as proton acceptor in the active site.

This sequence belongs to the TrpA family. In terms of assembly, tetramer of two alpha and two beta chains.

The enzyme catalyses (1S,2R)-1-C-(indol-3-yl)glycerol 3-phosphate + L-serine = D-glyceraldehyde 3-phosphate + L-tryptophan + H2O. It participates in amino-acid biosynthesis; L-tryptophan biosynthesis; L-tryptophan from chorismate: step 5/5. Its function is as follows. The alpha subunit is responsible for the aldol cleavage of indoleglycerol phosphate to indole and glyceraldehyde 3-phosphate. In Pectobacterium atrosepticum (strain SCRI 1043 / ATCC BAA-672) (Erwinia carotovora subsp. atroseptica), this protein is Tryptophan synthase alpha chain.